We begin with the raw amino-acid sequence, 134 residues long: Transmembrane protein 100 (134 aa).

Helical transmembrane passes span 56-76 (CIIPFAVVVFIAGIVVTAVAY) and 84-104 (IISIFGLVVLSSGLFLLASSA). Residue Ser-121 is modified to Phosphoserine.

As to quaternary structure, interacts (via C-terminus) with TRPA1 and TRPV1. Interacts with TASOR. In terms of tissue distribution, expressed in neurons of the myenteric and submucosal plexuses in the gastric body, jejunum and proximal colon. Expressed in arterial endothelial cells and neurons of the central nervous system and peripheral nervous system. Expressed in umbilical artery endothelial cells (at protein level).

Its subcellular location is the cell membrane. The protein resides in the membrane. It localises to the perikaryon. The protein localises to the cytoplasm. It is found in the perinuclear region. Its subcellular location is the endoplasmic reticulum. Plays a role during embryonic arterial endothelium differentiation and vascular morphogenesis through the ACVRL1 receptor-dependent signaling pathway upon stimulation by bone morphogenetic proteins, such as GDF2/BMP9 and BMP10. Involved in the regulation of nociception, acting as a modulator of the interaction between TRPA1 and TRPV1, two molecular sensors and mediators of pain signals in dorsal root ganglia (DRG) neurons. Mechanistically, it weakens their interaction, thereby releasing the inhibition of TRPA1 by TRPV1 and increasing the single-channel open probability of the TRPA1-TRPV1 complex. The sequence is that of Transmembrane protein 100 (TMEM100) from Homo sapiens (Human).